The sequence spans 94 residues: Pyrimidine/purine nucleoside phosphorylase 2 (94 aa).

This sequence belongs to the nucleoside phosphorylase PpnP family.

It catalyses the reaction a purine D-ribonucleoside + phosphate = a purine nucleobase + alpha-D-ribose 1-phosphate. The catalysed reaction is adenosine + phosphate = alpha-D-ribose 1-phosphate + adenine. The enzyme catalyses cytidine + phosphate = cytosine + alpha-D-ribose 1-phosphate. It carries out the reaction guanosine + phosphate = alpha-D-ribose 1-phosphate + guanine. It catalyses the reaction inosine + phosphate = alpha-D-ribose 1-phosphate + hypoxanthine. The catalysed reaction is thymidine + phosphate = 2-deoxy-alpha-D-ribose 1-phosphate + thymine. The enzyme catalyses uridine + phosphate = alpha-D-ribose 1-phosphate + uracil. It carries out the reaction xanthosine + phosphate = alpha-D-ribose 1-phosphate + xanthine. Its function is as follows. Catalyzes the phosphorolysis of diverse nucleosides, yielding D-ribose 1-phosphate and the respective free bases. Can use uridine, adenosine, guanosine, cytidine, thymidine, inosine and xanthosine as substrates. Also catalyzes the reverse reactions. The sequence is that of Pyrimidine/purine nucleoside phosphorylase 2 from Psychrobacter arcticus (strain DSM 17307 / VKM B-2377 / 273-4).